A 335-amino-acid polypeptide reads, in one-letter code: Delta(7)-sterol 5(6)-desaturase erg3B (335 aa).

The next 3 helical transmembrane spans lie at 74–94 (IWAF…ALVF), 113–133 (IGQA…LFLA), and 152–172 (LYTY…IYWI). The Fatty acid hydroxylase domain maps to 160–284 (LFIAFTDFAI…FITFWDRIGG (125 aa)). Residues 173 to 177 (HRGLH) carry the Histidine box-1 motif. The short motif at 186–190 (HKPHH) is the Histidine box-2 element. A helical membrane pass occupies residues 219–239 (PFLFPLQKAAYLGLFVFVTIW). N-linked (GlcNAc...) asparagine glycosylation is present at Asn256. The short motif at 261-265 (HTIHH) is the Histidine box-3 element.

Belongs to the sterol desaturase family. Requires Fe cation as cofactor.

It localises to the endoplasmic reticulum membrane. It participates in steroid metabolism; ergosterol biosynthesis. Delta(7)-sterol 5(6)-desaturase; part of the third module of ergosterol biosynthesis pathway that includes the late steps of the pathway. Erg3B catalyzes the introduction of a C-5 double bond in the B ring to produce 5-dehydroepisterol. The third module or late pathway involves the ergosterol synthesis itself through consecutive reactions that mainly occur in the endoplasmic reticulum (ER) membrane. Firstly, the squalene synthase erg9 catalyzes the condensation of 2 farnesyl pyrophosphate moieties to form squalene, which is the precursor of all steroids. Squalene synthase is crucial for balancing the incorporation of farnesyl diphosphate (FPP) into sterol and nonsterol isoprene synthesis. Secondly, squalene is converted into lanosterol by the consecutive action of the squalene epoxidase erg1 and the lanosterol synthase erg7. Then, the delta(24)-sterol C-methyltransferase erg6 methylates lanosterol at C-24 to produce eburicol. Eburicol is the substrate of the sterol 14-alpha demethylase encoded by cyp51A and cyp51B, to yield 4,4,24-trimethyl ergosta-8,14,24(28)-trienol. The C-14 reductase erg24 then reduces the C14=C15 double bond which leads to 4,4-dimethylfecosterol. A sequence of further demethylations at C-4, involving the C-4 demethylation complex containing the C-4 methylsterol oxidases erg25A or erg25B, the sterol-4-alpha-carboxylate 3-dehydrogenase erg26 and the 3-keto-steroid reductase erg27, leads to the production of fecosterol via 4-methylfecosterol. The C-8 sterol isomerase erg2 then catalyzes the reaction which results in unsaturation at C-7 in the B ring of sterols and thus converts fecosterol to episterol. The sterol-C5-desaturase erg3B then catalyzes the introduction of a C-5 double bond in the B ring to produce 5-dehydroepisterol. The 2 other sterol-C5-desaturases, erg3A and erg3C, seem to be less important in ergosterol biosynthesis. The C-22 sterol desaturase erg5 further converts 5-dehydroepisterol into ergosta-5,7,22,24(28)-tetraen-3beta-ol by forming the C-22(23) double bond in the sterol side chain. Finally, ergosta-5,7,22,24(28)-tetraen-3beta-ol is substrate of the C-24(28) sterol reductases erg4A and erg4B to produce ergosterol. Possible alternative sterol biosynthetic pathways might exist from fecosterol to ergosterol, depending on the activities of the erg3 isoforms. The sequence is that of Delta(7)-sterol 5(6)-desaturase erg3B from Aspergillus fumigatus (strain ATCC MYA-4609 / CBS 101355 / FGSC A1100 / Af293) (Neosartorya fumigata).